We begin with the raw amino-acid sequence, 400 residues long: Tektin-B1 (400 aa).

3 coiled-coil regions span residues 35-81 (TRLS…AKAL), 236-294 (FALR…LENR), and 310-353 (GLVN…LELK).

Belongs to the tektin family. As to quaternary structure, may form a heterodimer with tektin a or exist as a homodimer. In terms of tissue distribution, cilia and flagella.

It is found in the cytoplasm. Its subcellular location is the cytoskeleton. In terms of biological role, structural component of ciliary and flagellar microtubules. This Strongylocentrotus purpuratus (Purple sea urchin) protein is Tektin-B1.